Here is a 254-residue protein sequence, read N- to C-terminus: Enolase-phosphatase E1 (254 aa).

Positions 13 and 15 each coordinate Mg(2+). Substrate contacts are provided by residues 127–128 (SS) and Lys-173. Asp-200 is a binding site for Mg(2+).

Belongs to the HAD-like hydrolase superfamily. MasA/MtnC family. Monomer. Requires Mg(2+) as cofactor.

The protein resides in the cytoplasm. Its subcellular location is the nucleus. The enzyme catalyses 5-methylsulfanyl-2,3-dioxopentyl phosphate + H2O = 1,2-dihydroxy-5-(methylsulfanyl)pent-1-en-3-one + phosphate. It participates in amino-acid biosynthesis; L-methionine biosynthesis via salvage pathway; L-methionine from S-methyl-5-thio-alpha-D-ribose 1-phosphate: step 3/6. Its pathway is amino-acid biosynthesis; L-methionine biosynthesis via salvage pathway; L-methionine from S-methyl-5-thio-alpha-D-ribose 1-phosphate: step 4/6. Functionally, bifunctional enzyme that catalyzes the enolization of 2,3-diketo-5-methylthiopentyl-1-phosphate (DK-MTP-1-P) into the intermediate 2-hydroxy-3-keto-5-methylthiopentenyl-1-phosphate (HK-MTPenyl-1-P), which is then dephosphorylated to form the acireductone 1,2-dihydroxy-3-keto-5-methylthiopentene (DHK-MTPene). This Sclerotinia sclerotiorum (strain ATCC 18683 / 1980 / Ss-1) (White mold) protein is Enolase-phosphatase E1 (utr4).